The primary structure comprises 534 residues: Endoglucanase 5 (534 aa).

Residues 1–27 (MSDVSGRFVVAAAVVAVSLAMAAAAAA) form the signal peptide. D82 acts as the Nucleophile in catalysis. Active-site residues include H432, D484, and E493. The interval 515–534 (RRRGEDAPPSSTSPVAEDDL) is disordered.

It belongs to the glycosyl hydrolase 9 (cellulase E) family.

The protein localises to the secreted. The enzyme catalyses Endohydrolysis of (1-&gt;4)-beta-D-glucosidic linkages in cellulose, lichenin and cereal beta-D-glucans.. The sequence is that of Endoglucanase 5 from Oryza sativa subsp. japonica (Rice).